Consider the following 586-residue polypeptide: Eukaryotic translation initiation factor 3 subunit D (586 aa).

Disordered regions lie at residues 16–37 (EDSW…YAPF) and 104–176 (KRTF…REPS). Over residues 108 to 131 (GRGGGTVFRGRAQRGGAGQRGGRA) the composition is skewed to gly residues. Residues 162–174 (GWKDYDKPQRTRE) are compositionally biased toward basic and acidic residues. The segment at 301–315 (SIDLVTVNENAADAP) is RNA gate. Residues 563–586 (ANTFEEDDEAADEQEEKATEESEE) are disordered. Residues 566-577 (FEEDDEAADEQE) show a composition bias toward acidic residues.

This sequence belongs to the eIF-3 subunit D family. In terms of assembly, component of the eukaryotic translation initiation factor 3 (eIF-3) complex.

It localises to the cytoplasm. MRNA cap-binding component of the eukaryotic translation initiation factor 3 (eIF-3) complex, which is involved in protein synthesis of a specialized repertoire of mRNAs and, together with other initiation factors, stimulates binding of mRNA and methionyl-tRNAi to the 40S ribosome. The eIF-3 complex specifically targets and initiates translation of a subset of mRNAs involved in cell proliferation. In the eIF-3 complex, eif3d specifically recognizes and binds the 7-methylguanosine cap of a subset of mRNAs. This Aspergillus clavatus (strain ATCC 1007 / CBS 513.65 / DSM 816 / NCTC 3887 / NRRL 1 / QM 1276 / 107) protein is Eukaryotic translation initiation factor 3 subunit D.